Reading from the N-terminus, the 365-residue chain is Sulfate/thiosulfate import ATP-binding protein CysA (365 aa).

The ABC transporter domain maps to 3 to 237; it reads IEIANIKKSF…PATRFVLEFM (235 aa). 35 to 42 lines the ATP pocket; sequence GPSGSGKT.

This sequence belongs to the ABC transporter superfamily. Sulfate/tungstate importer (TC 3.A.1.6) family. As to quaternary structure, the complex is composed of two ATP-binding proteins (CysA), two transmembrane proteins (CysT and CysW) and a solute-binding protein (CysP).

Its subcellular location is the cell inner membrane. It catalyses the reaction sulfate(out) + ATP + H2O = sulfate(in) + ADP + phosphate + H(+). The catalysed reaction is thiosulfate(out) + ATP + H2O = thiosulfate(in) + ADP + phosphate + H(+). Its function is as follows. Part of the ABC transporter complex CysAWTP involved in sulfate/thiosulfate import. Responsible for energy coupling to the transport system. In Shigella flexneri, this protein is Sulfate/thiosulfate import ATP-binding protein CysA.